Here is a 609-residue protein sequence, read N- to C-terminus: UvrABC system protein C (609 aa).

Positions 15–92 (TGSGVYQMQD…IKQFRPRYNV (78 aa)) constitute a GIY-YIG domain. Residues 202–237 (DQVIIKLTERMEVTSENLVFEEAAHYRDQIRQLRRL) enclose the UVR domain.

Belongs to the UvrC family. Interacts with UvrB in an incision complex.

Its subcellular location is the cytoplasm. Functionally, the UvrABC repair system catalyzes the recognition and processing of DNA lesions. UvrC both incises the 5' and 3' sides of the lesion. The N-terminal half is responsible for the 3' incision and the C-terminal half is responsible for the 5' incision. The polypeptide is UvrABC system protein C (Coxiella burnetii (strain RSA 493 / Nine Mile phase I)).